The following is a 452-amino-acid chain: Probable 1,4-beta-D-glucan cellobiohydrolase A (452 aa).

The N-terminal stretch at 1-17 (MHQRALLFSALLTAVRA) is a signal peptide. Residue asparagine 62 is glycosylated (N-linked (GlcNAc...) asparagine). Residue glutamate 227 is the Nucleophile of the active site. Residue glutamate 232 is the Proton donor of the active site. N-linked (GlcNAc...) asparagine glycans are attached at residues asparagine 285, asparagine 335, asparagine 402, and asparagine 445.

This sequence belongs to the glycosyl hydrolase 7 (cellulase C) family.

The protein resides in the secreted. It catalyses the reaction Hydrolysis of (1-&gt;4)-beta-D-glucosidic linkages in cellulose and cellotetraose, releasing cellobiose from the non-reducing ends of the chains.. Its function is as follows. The biological conversion of cellulose to glucose generally requires three types of hydrolytic enzymes: (1) Endoglucanases which cut internal beta-1,4-glucosidic bonds; (2) Exocellobiohydrolases that cut the disaccharide cellobiose from the non-reducing end of the cellulose polymer chain; (3) Beta-1,4-glucosidases which hydrolyze the cellobiose and other short cello-oligosaccharides to glucose. This Aspergillus niger (strain ATCC MYA-4892 / CBS 513.88 / FGSC A1513) protein is Probable 1,4-beta-D-glucan cellobiohydrolase A (cbhA).